Reading from the N-terminus, the 237-residue chain is Lycopene beta-cyclase (237 aa).

Helical transmembrane passes span 3–23 (TSYL…LGVV), 38–58 (VGIL…YLIA), 80–100 (EYLF…ALPL), 113–133 (AVLG…LLTV), 137–157 (FYIG…WAVG), 170–192 (AAVL…DGIW), and 213–233 (AFFF…AWVL).

This sequence belongs to the lycopene beta-cyclase family.

The protein resides in the cell membrane. The enzyme catalyses a carotenoid psi-end group = a carotenoid beta-end derivative. It catalyses the reaction all-trans-lycopene = gamma-carotene. The catalysed reaction is gamma-carotene = all-trans-beta-carotene. Its pathway is carotenoid biosynthesis; beta-carotene biosynthesis. In terms of biological role, catalyzes the cyclization of both ends of lycopene to form beta-carotene, a retinal precursor. Is required for bacteriorhodopsin biogenesis, a light-driven proton pump with a covalently bound retinal cofactor. This Halobacterium salinarum (strain ATCC 29341 / DSM 671 / R1) protein is Lycopene beta-cyclase.